Consider the following 215-residue polypeptide: uncharacterized protein (215 aa).

Helical transmembrane passes span 21–40 (IIKYLVIFFLFCIISTVLIN), 50–69 (LIFSVICLLISLIGFSSVIF), 95–117 (FFAIFISSTIGLVFVLPIIYVLF), 122–144 (LEIIFFFSSVWMILVLSSSLVVL), 156–178 (ANFVGTFIMPLLIPNIIMTGLIL), and 183–205 (LQLIFIMIGINLVFLPISFFLSS).

It belongs to the CcmB/CycW/HelB family.

The protein localises to the cell membrane. This is an uncharacterized protein from Rickettsia conorii (strain ATCC VR-613 / Malish 7).